We begin with the raw amino-acid sequence, 111 residues long: Flagellar hook-basal body complex protein FliE (111 aa).

This sequence belongs to the FliE family.

The protein localises to the bacterial flagellum basal body. This chain is Flagellar hook-basal body complex protein FliE, found in Brucella ovis (strain ATCC 25840 / 63/290 / NCTC 10512).